The primary structure comprises 509 residues: 5-OH-xanthotoxin synthase (509 aa).

Residues alanine 5 to histidine 25 form a helical membrane-spanning segment. Residues threonine 368–isoleucine 373 form a substrate specificity region. Cysteine 449 lines the heme pocket.

Belongs to the cytochrome P450 family. Requires heme as cofactor.

It localises to the microsome membrane. The enzyme catalyses xanthotoxin + reduced [NADPH--hemoprotein reductase] + O2 = 5-hydroxyxanthotoxin + oxidized [NADPH--hemoprotein reductase] + H2O + 2 H(+). It functions in the pathway secondary metabolite biosynthesis. Its function is as follows. Involved in the biosynthesis of coumarins and furanocoumarins (FCs), natural products required for defense responses against attacks by predators with potential medical and agroindustrial usages such as anticoagulant, rodenticide and artificial vanilla substitutes. Catalyzes the conversion of xanthotoxin into 5-hydroxyxanthotoxin. The sequence is that of 5-OH-xanthotoxin synthase from Ammi majus (Bishop's weed).